Consider the following 138-residue polypeptide: Large ribosomal subunit protein bL17 (138 aa).

Belongs to the bacterial ribosomal protein bL17 family. Part of the 50S ribosomal subunit. Contacts protein L32.

This chain is Large ribosomal subunit protein bL17, found in Halorhodospira halophila (strain DSM 244 / SL1) (Ectothiorhodospira halophila (strain DSM 244 / SL1)).